A 151-amino-acid polypeptide reads, in one-letter code: Ubiquitin-conjugating enzyme E2 2 (151 aa).

Residues 4–150 enclose the UBC core domain; sequence AARRRLMRDF…VRETVERSWE (147 aa). C88 acts as the Glycyl thioester intermediate in catalysis.

It belongs to the ubiquitin-conjugating enzyme family.

Its subcellular location is the cytoplasm. The protein localises to the nucleus. It catalyses the reaction S-ubiquitinyl-[E1 ubiquitin-activating enzyme]-L-cysteine + [E2 ubiquitin-conjugating enzyme]-L-cysteine = [E1 ubiquitin-activating enzyme]-L-cysteine + S-ubiquitinyl-[E2 ubiquitin-conjugating enzyme]-L-cysteine.. It functions in the pathway protein modification; protein ubiquitination. Its function is as follows. Catalyzes the covalent attachment of ubiquitin to other proteins. Plays a role in transcription regulation by catalyzing the monoubiquitination of histone H2B to form H2BK123ub1. H2BK123ub1 gives a specific tag for epigenetic transcriptional activation and is also a prerequisite for H3K4me and H3K79me formation. Also involved in postreplication repair of UV-damaged DNA, in N-end rule-dependent protein degradation and in sporulation. The sequence is that of Ubiquitin-conjugating enzyme E2 2 (UBC2) from Trichoderma harzianum (Hypocrea lixii).